The sequence spans 404 residues: Zinc metalloprotease Rip1 (404 aa).

Residues 1 to 21 (MMFVTGIVLFALAILISVALH) form a helical membrane-spanning segment. Position 21 (histidine 21) interacts with Zn(2+). The active site involves glutamate 22. Histidine 25 is a binding site for Zn(2+). Residues 104–124 (PGMNLAICLVLIYAIALVWGL) traverse the membrane as a helical segment. The region spanning 121–203 (VWGLPNLHPP…SVPIVVERDG (83 aa)) is the PDZ domain. A Zn(2+)-binding site is contributed by aspartate 202. 2 consecutive transmembrane segments (helical) span residues 313 to 333 (LWVA…TINL) and 373 to 393 (LLPA…LTVT).

The protein belongs to the peptidase M50B family. The cofactor is Zn(2+).

It is found in the cell membrane. In terms of biological role, a probable intramembrane site-2 protease (S2P) that cleaves type-2 transmembrane proteins within their membrane-spanning domains. Cleaves PbpB (PBP3, FtsI); cleavage is inhibited by Wag31-PbpB interaction. Probably also cleaves anti-sigma factors RskA, RslA and RsmA. Functionally, regulated intramembrane proteolysis (RIP) occurs when an extracytoplasmic signal (possibly oxidative stress) triggers a concerted proteolytic cascade to transmit information and elicit cellular responses. The membrane-spanning regulatory substrate protein (includes anti-sigma factors RskA, RslA, RsmA, and PbpB in M.tuberculosis) is first cut extracytoplasmically (site-1 protease, S1P), then within the membrane itself (site-2 protease, S2P, this entry), while cytoplasmic proteases finish degrading the regulatory protein, liberating the effector protein (ECF sigma factors SigK, SigL and SigM). The chain is Zinc metalloprotease Rip1 (rip1) from Mycobacterium bovis (strain BCG / Pasteur 1173P2).